Reading from the N-terminus, the 142-residue chain is Galactose-6-phosphate isomerase subunit LacA (142 aa).

This sequence belongs to the LacAB/RpiB family. As to quaternary structure, heteromultimeric protein consisting of LacA and LacB.

The enzyme catalyses aldehydo-D-galactose 6-phosphate = keto-D-tagatose 6-phosphate. It functions in the pathway carbohydrate metabolism; D-galactose 6-phosphate degradation; D-tagatose 6-phosphate from D-galactose 6-phosphate: step 1/1. This is Galactose-6-phosphate isomerase subunit LacA from Staphylococcus haemolyticus (strain JCSC1435).